We begin with the raw amino-acid sequence, 219 residues long: ATP-dependent dethiobiotin synthetase BioD (219 aa).

14-19 (DVGKTY) contacts ATP. Residue Thr-18 coordinates Mg(2+). Residue Lys-37 is part of the active site. Residue Ser-41 participates in substrate binding. ATP is bound by residues Asp-54, 114–117 (EGAG), and 175–176 (NN). Positions 54 and 114 each coordinate Mg(2+).

This sequence belongs to the dethiobiotin synthetase family. In terms of assembly, homodimer. Mg(2+) is required as a cofactor.

Its subcellular location is the cytoplasm. The enzyme catalyses (7R,8S)-7,8-diammoniononanoate + CO2 + ATP = (4R,5S)-dethiobiotin + ADP + phosphate + 3 H(+). Its pathway is cofactor biosynthesis; biotin biosynthesis; biotin from 7,8-diaminononanoate: step 1/2. Its function is as follows. Catalyzes a mechanistically unusual reaction, the ATP-dependent insertion of CO2 between the N7 and N8 nitrogen atoms of 7,8-diaminopelargonic acid (DAPA, also called 7,8-diammoniononanoate) to form a ureido ring. The sequence is that of ATP-dependent dethiobiotin synthetase BioD from Fusobacterium nucleatum subsp. nucleatum (strain ATCC 25586 / DSM 15643 / BCRC 10681 / CIP 101130 / JCM 8532 / KCTC 2640 / LMG 13131 / VPI 4355).